The primary structure comprises 200 residues: ATP synthase subunit s, mitochondrial (200 aa).

Residues 1-25 (MMLFGKISQQLCGVKKLPWSCDSRY) constitute a mitochondrion transit peptide. Residues 1 to 61 (MMLFGKISQQ…SEWLLRCGAM (61 aa)) are N-terminal domain. Gly59 provides a ligand contact to Mg(2+). LRR repeat units follow at residues 62 to 87 (VRYH…KYKI), 88 to 116 (QAID…KIRL), 117 to 141 (CKCH…KTIL), and 142 to 173 (EMEI…LSDL). Residue Thr93 participates in Mg(2+) binding.

Belongs to the ATP synthase subunit s family. Homotetramer. Associates with ATP synthase.

It localises to the mitochondrion. The protein resides in the mitochondrion inner membrane. Functionally, involved in regulation of mitochondrial membrane ATP synthase. Necessary for H(+) conduction of ATP synthase. Facilitates energy-driven catalysis of ATP synthesis by blocking a proton leak through an alternative proton exit pathway. The chain is ATP synthase subunit s, mitochondrial (DMAC2L) from Pongo abelii (Sumatran orangutan).